A 546-amino-acid polypeptide reads, in one-letter code: Apolipoprotein N-acyltransferase 1 (546 aa).

7 consecutive transmembrane segments (helical) span residues 14-34, 41-61, 62-82, 85-105, 122-142, 151-171, and 194-214; these read FLLFVLAVSLFALSHPNPLLP, AYGALAPLFLLVRWASGFAVV, FWGGAYGAFSYGAFSYWLFVF, VALCVVAGFSALFLAALCLAL, LVWLGYEYAKTLGFLGFPYGV, LPLIQVASVFGVWVVSALVVF, and FLSAAYSHWVSALVWVGLCGF. Residues 233 to 502 enclose the CN hydrolase domain; sequence AKVALVQPNG…PGVLVADVPI (270 aa). Glutamate 280 (proton acceptor) is an active-site residue. Lysine 361 is an active-site residue. Residue cysteine 413 is the Nucleophile of the active site. Residues 514 to 534 traverse the membrane as a helical segment; sequence GDALGVFFCVASLFILIAGGV.

The protein belongs to the CN hydrolase family. Apolipoprotein N-acyltransferase subfamily.

It localises to the cell inner membrane. It carries out the reaction N-terminal S-1,2-diacyl-sn-glyceryl-L-cysteinyl-[lipoprotein] + a glycerophospholipid = N-acyl-S-1,2-diacyl-sn-glyceryl-L-cysteinyl-[lipoprotein] + a 2-acyl-sn-glycero-3-phospholipid + H(+). It participates in protein modification; lipoprotein biosynthesis (N-acyl transfer). Catalyzes the phospholipid dependent N-acylation of the N-terminal cysteine of apolipoprotein, the last step in lipoprotein maturation. This Treponema pallidum (strain Nichols) protein is Apolipoprotein N-acyltransferase 1.